The following is a 32-amino-acid chain: 24 kDa flagellin (32 aa).

It belongs to the archaeal flagellin family. Post-translationally, glycosylated.

Its subcellular location is the archaeal flagellum. In terms of biological role, flagellin is the subunit protein which polymerizes to form the filaments of archaeal flagella. This chain is 24 kDa flagellin, found in Methanospirillum hungatei.